The following is a 281-amino-acid chain: MGRYAVLVSGPAGSGKSTFCSALIAHAQSLGRNVHLFNLDPAAERFEYQPSIDIKELISLEDVMEEMNLGPNGGLIYCFEYLLDNLDWLDDELGQFNDDYIIIDCPGQIELYTHFPIMSRLVNILSSQYHFRICATYLLESQFIDDKTKYFAGVLSAMSAMINLEVPHINLLSKMDLVEKGEIGSEAKRGRKREMERYLDPDPLLLMDEVNSRTNPKFHSLNQALVQLIDDFSMVSFMPLDSTDEDSVGTILSHIDNAVQYGEDEEPKEPKDMDEGDFTAQ.

13–18 (GSGKST) is a GTP binding site. The Gly-Pro-Asn (GPN)-loop; involved in dimer interface motif lies at 70–72 (GPN). 173 to 176 (SKMD) provides a ligand contact to GTP. Positions 259 to 281 (VQYGEDEEPKEPKDMDEGDFTAQ) are disordered.

It belongs to the GPN-loop GTPase family. As to quaternary structure, heterodimers with GPN1 or GPN2. Binds to RNA polymerase II (RNAPII).

In terms of biological role, small GTPase required for proper nuclear import of RNA polymerase II and III (RNAPII and RNAPIII). May act at an RNAP assembly step prior to nuclear import. In Mycosarcoma maydis (Corn smut fungus), this protein is GPN-loop GTPase 3.